We begin with the raw amino-acid sequence, 508 residues long: Serine/threonine protein kinase OSK3 (508 aa).

The region spanning 17–269 (YNLGRTLGIG…IREIREHQWF (253 aa)) is the Protein kinase domain. ATP is bound by residues 23 to 31 (LGIGSFGKV) and K46. D140 (proton acceptor) is an active-site residue. The UBA domain occupies 290 to 330 (MIDEDTLQDVVNLGYGKDHVCESLRNRLQNEATVAYYLLLD). The KA1 domain maps to 459-507 (NGRLPAVIKFEIQLYKTRDEKYLLDMQRVTGPQLLFLDFCADFLTKLRV).

This sequence belongs to the protein kinase superfamily. Ser/Thr protein kinase family. Interacts with HDR1. In terms of tissue distribution, strongly expressed in immature seeds. Mostly expressed in panicles, and to a lower extent, in leaf sheaths.

It is found in the nucleus. The enzyme catalyses L-seryl-[protein] + ATP = O-phospho-L-seryl-[protein] + ADP + H(+). It catalyses the reaction L-threonyl-[protein] + ATP = O-phospho-L-threonyl-[protein] + ADP + H(+). The polypeptide is Serine/threonine protein kinase OSK3 (Oryza sativa subsp. indica (Rice)).